The following is a 163-amino-acid chain: 5-hydroxymethyl-dUMP N-hydrolase (163 aa).

Residue A2 is modified to N-acetylalanine. Residue G16 participates in 5-hydroxymethyl-dUMP binding. At S17 the chain carries Phosphoserine. Positions 18, 19, 20, 87, 89, and 93 each coordinate 5-hydroxymethyl-dUMP. Residue S87 is modified to Phosphoserine. Phosphoserine occurs at positions 112, 117, 127, and 158. S117 is a binding site for 5-hydroxymethyl-dUMP.

In terms of assembly, monomer and homodimer. In terms of tissue distribution, highly expressed in heart, kidney, liver and spleen. Weakly expressed in lung and skeletal muscle.

The protein localises to the cytoplasm. The protein resides in the nucleus. It carries out the reaction 5-hydroxymethyl-dUMP + H2O = 5-hydroxymethyluracil + 2-deoxy-D-ribose 5-phosphate. Functionally, part of a nucleotide salvage pathway that eliminates epigenetically modified 5-hydroxymethyl-dCMP (hmdCMP) in a two-step process entailing deamination to cytotoxic 5-hydroxymethyl-dUMP (hmdUMP), followed by its hydrolysis into 5-hydroxymethyluracil (hmU) and 2-deoxy-D-ribose 5-phosphate (deoxyribosephosphate). Catalyzes the second step in that pathway, the hydrolysis of the N-glycosidic bond in hmdUMP, degrading this cytotoxic nucleotide to avoid its genomic integration. The sequence is that of 5-hydroxymethyl-dUMP N-hydrolase from Rattus norvegicus (Rat).